A 207-amino-acid chain; its full sequence is Superoxide dismutase [Mn] (207 aa).

Mn(2+)-binding residues include His28, His76, Asp160, and His164.

Belongs to the iron/manganese superoxide dismutase family. Mn(2+) is required as a cofactor.

The enzyme catalyses 2 superoxide + 2 H(+) = H2O2 + O2. In terms of biological role, destroys superoxide anion radicals which are normally produced within the cells and which are toxic to biological systems. The sequence is that of Superoxide dismutase [Mn] (sodA) from Mycobacterium intracellulare (strain ATCC 13950 / DSM 43223 / JCM 6384 / NCTC 13025 / 3600).